A 178-amino-acid polypeptide reads, in one-letter code: CDP-diacylglycerol--glycerol-3-phosphate 3-phosphatidyltransferase (178 aa).

A run of 4 helical transmembrane segments spans residues 5-25 (PNYLTIARIMVIPVIILLFYI), 32-52 (KLGALLFVLASITDFFDGYIA), 61-81 (FGKMFDPIADKLLVGCVTIML), and 145-165 (IIYLDIVGEIILWIAAFLTII).

It belongs to the CDP-alcohol phosphatidyltransferase class-I family.

Its subcellular location is the cell membrane. The enzyme catalyses a CDP-1,2-diacyl-sn-glycerol + sn-glycerol 3-phosphate = a 1,2-diacyl-sn-glycero-3-phospho-(1'-sn-glycero-3'-phosphate) + CMP + H(+). Its pathway is phospholipid metabolism; phosphatidylglycerol biosynthesis; phosphatidylglycerol from CDP-diacylglycerol: step 1/2. In terms of biological role, this protein catalyzes the committed step to the synthesis of the acidic phospholipids. This Rickettsia typhi (strain ATCC VR-144 / Wilmington) protein is CDP-diacylglycerol--glycerol-3-phosphate 3-phosphatidyltransferase (pgsA).